Consider the following 972-residue polypeptide: Optomotor-blind protein (972 aa).

Disordered stretches follow at residues 44-248 (SLLT…YFPA), 263-286 (PGLY…HAHH), 508-563 (AKGF…HPHA), 645-676 (ADVE…TGSP), 805-889 (AVTP…PSEL), and 918-972 (EEAA…GTDQ). Low complexity-rich tracts occupy residues 49–80 (GSNN…NTNN) and 97–142 (SNHS…NNTS). Over residues 155-176 (PPSPAGTPPPTIVGLPPIPPPN) the composition is skewed to pro residues. 2 stretches are compositionally biased toward low complexity: residues 177-193 (NNSS…AAAH) and 201-212 (AHHSPSTGAAAP). Positions 213–225 (PAGPTGLPPPTPP) are enriched in pro residues. Low complexity predominate over residues 226–237 (HHLQQQQQQQQH). Residues 274–286 (PPHHPGAHPHAHH) show a composition bias toward basic residues. Positions 332–513 (LEGKDLWEKF…NNPFAKGFRD (182 aa)) form a DNA-binding region, T-box. Residues 818-831 (PPGGGGGGLGGGVV) are compositionally biased toward gly residues. The segment covering 835 to 851 (PRSLSSSPRPRPASHSP) has biased composition (low complexity). Ser-887 is subject to Phosphoserine. Over residues 952-963 (HPHHQTHLHSHH) the composition is skewed to basic residues.

In terms of tissue distribution, in third-instar larvae, expressed in the brain region that will develop into optic lobes and more weakly in the thoracic part of the ventral ganglion.

It is found in the nucleus. Essential protein that may function as a transcription regulator. Vital for pupal development. Required for proper development of the optic lobes and wings, and abdominal pigmentation. The sequence is that of Optomotor-blind protein (bi) from Drosophila melanogaster (Fruit fly).